The primary structure comprises 338 residues: Glycerol-3-phosphate dehydrogenase [NAD(P)+] (338 aa).

NADPH contacts are provided by Ser14, Tyr15, His35, and Lys109. 3 residues coordinate sn-glycerol 3-phosphate: Lys109, Gly138, and Thr140. NADPH is bound at residue Ala142. Sn-glycerol 3-phosphate contacts are provided by Lys194, Asp247, Ser257, Arg258, and Asn259. Lys194 (proton acceptor) is an active-site residue. Residue Arg258 participates in NADPH binding. NADPH-binding residues include Val282 and Glu284.

It belongs to the NAD-dependent glycerol-3-phosphate dehydrogenase family.

It localises to the cytoplasm. It carries out the reaction sn-glycerol 3-phosphate + NAD(+) = dihydroxyacetone phosphate + NADH + H(+). The catalysed reaction is sn-glycerol 3-phosphate + NADP(+) = dihydroxyacetone phosphate + NADPH + H(+). The protein operates within membrane lipid metabolism; glycerophospholipid metabolism. In terms of biological role, catalyzes the reduction of the glycolytic intermediate dihydroxyacetone phosphate (DHAP) to sn-glycerol 3-phosphate (G3P), the key precursor for phospholipid synthesis. The polypeptide is Glycerol-3-phosphate dehydrogenase [NAD(P)+] (Shewanella baltica (strain OS185)).